Here is a 69-residue protein sequence, read N- to C-terminus: U2-agatoxin-Ao1c (69 aa).

A signal peptide spans 1-20; it reads MKAIISLLLISAMVFSMIEA. The propeptide occupies 21–34; that stretch reads VPVEEGLQLFEGER. Intrachain disulfides connect Cys-36-Cys-52, Cys-43-Cys-57, and Cys-51-Cys-67. Leu-68 bears the Leucine amide mark.

This sequence belongs to the neurotoxin 01 (U2-agtx) family. Expressed by the venom gland.

It localises to the secreted. Its function is as follows. Insect active toxin causing rapid but reversible paralysis in crickets. No activity shown in mammals. Does not show effect on mammalian voltage-gated calcium channels. The polypeptide is U2-agatoxin-Ao1c (Agelena orientalis (Funnel-web spider)).